The sequence spans 119 residues: MARVLNIEIPNNKKARISLTYIFGIGPTIAKQILADANVDGEKRVKELTEEELTRIRDEAKKYTTEGDLKREINLNIKRLMEIKSYRVIRHRKDTCKRSTKKNARTRKGPKKDNRWKER.

A compositionally biased stretch (basic residues) spans 92 to 110 (RKDTCKRSTKKNARTRKGP). The segment at 92–119 (RKDTCKRSTKKNARTRKGPKKDNRWKER) is disordered.

This sequence belongs to the universal ribosomal protein uS13 family. As to quaternary structure, part of the 30S ribosomal subunit. Forms a loose heterodimer with protein S19. Forms two bridges to the 50S subunit in the 70S ribosome.

Located at the top of the head of the 30S subunit, it contacts several helices of the 16S rRNA. In the 70S ribosome it contacts the 23S rRNA (bridge B1a) and protein L5 of the 50S subunit (bridge B1b), connecting the 2 subunits; these bridges are implicated in subunit movement. Contacts the tRNAs in the A and P-sites. The chain is Small ribosomal subunit protein uS13 from Mycoplasma sp.